We begin with the raw amino-acid sequence, 393 residues long: Sex hormone-binding globulin (393 aa).

Positions 1-27 (MEGRGPLATSPRRRWLLLLLLLPHSHQ) are cleaved as a signal peptide. 2 Laminin G-like domains span residues 35 to 208 (VHLS…PRSC) and 215 to 381 (GSFF…THSC). 2 cysteine pairs are disulfide-bonded: Cys183/Cys208 and Cys353/Cys381. Residues Asn371 and Asn387 are each glycosylated (N-linked (GlcNAc...) asparagine).

As to quaternary structure, homodimer.

It is found in the secreted. Functions as an androgen transport protein, but may also be involved in receptor mediated processes. Each dimer binds one molecule of steroid. Specific for 5-alpha-dihydrotestosterone, testosterone, and 17-beta-estradiol. Regulates the plasma metabolic clearance rate of steroid hormones by controlling their plasma concentration. The sequence is that of Sex hormone-binding globulin (SHBG) from Crocuta crocuta (Spotted hyena).